The sequence spans 974 residues: RING finger protein nhl-1 (974 aa).

The disordered stretch occupies residues 1-29; sequence MSSSPQNEAEAREKMRELMSRPPSSRPAD. Residues 9–19 are compositionally biased toward basic and acidic residues; the sequence is AEAREKMRELM. The RING-type zinc-finger motif lies at 43–84; it reads CPICLDRYKQPKLLPCQHTFCYPCLESCADTLHRNLKCPECR. Disordered stretches follow at residues 360–395 and 416–548; these read VKSDERASMRDREADRTSSRHSHRNPEPDESSIRYR and SLLT…DFPV. Residues 416–431 are compositionally biased toward polar residues; that stretch reads SLLTTSVTADSSSRTS. Over residues 437–446 the composition is skewed to basic and acidic residues; sequence RVTRSVEPTK. The segment covering 447 to 465 has biased composition (polar residues); it reads SRPTSLIVPNTETPRTVSP. Residues 488–501 show a composition bias toward pro residues; sequence APLPQLPIRKPPLP. Residues 511–528 show a composition bias toward basic and acidic residues; the sequence is LNEKVETIRRAHQQRQDA. A compositionally biased stretch (low complexity) spans 529 to 538; it reads SRAASRAVSS. NHL repeat units lie at residues 699 to 742, 746 to 788, 792 to 835, 839 to 883, 887 to 930, and 934 to 974; these read RAVF…FDKD, VRQF…FGLE, LFSF…FDKN, IAKF…FDPH, LFSF…FDAQ, and VSSF…IQIF.

As to quaternary structure, interacts with ubc-13.

In Caenorhabditis elegans, this protein is RING finger protein nhl-1.